A 181-amino-acid polypeptide reads, in one-letter code: Adenine phosphoribosyltransferase (181 aa).

Belongs to the purine/pyrimidine phosphoribosyltransferase family. Homodimer.

It is found in the cytoplasm. It catalyses the reaction AMP + diphosphate = 5-phospho-alpha-D-ribose 1-diphosphate + adenine. Its pathway is purine metabolism; AMP biosynthesis via salvage pathway; AMP from adenine: step 1/1. Its function is as follows. Catalyzes a salvage reaction resulting in the formation of AMP, that is energically less costly than de novo synthesis. In Aliivibrio salmonicida (strain LFI1238) (Vibrio salmonicida (strain LFI1238)), this protein is Adenine phosphoribosyltransferase.